A 427-amino-acid polypeptide reads, in one-letter code: Methylthioribose kinase 2 (427 aa).

ATP-binding positions include 49 to 53 (DGNLN), lysine 68, and 122 to 124 (RYI). Asparagine 51 contributes to the substrate binding site. A substrate-binding site is contributed by aspartate 243. 260-262 (DPE) serves as a coordination point for ATP. Arginine 370 contacts substrate.

Belongs to the methylthioribose kinase family. In terms of assembly, homodimer.

It catalyses the reaction 5-(methylsulfanyl)-D-ribose + ATP = 5-(methylsulfanyl)-alpha-D-ribose 1-phosphate + ADP + H(+). Its pathway is amino-acid biosynthesis; L-methionine biosynthesis via salvage pathway; S-methyl-5-thio-alpha-D-ribose 1-phosphate from S-methyl-5'-thioadenosine (hydrolase route): step 2/2. Functionally, catalyzes the phosphorylation of methylthioribose into methylthioribose-1-phosphate. The polypeptide is Methylthioribose kinase 2 (MTK2) (Oryza sativa subsp. japonica (Rice)).